The sequence spans 655 residues: p-hydroxybenzoic acid efflux pump subunit AaeB (655 aa).

At 1–12 the chain is on the periplasmic side; sequence MDIFSIANQHIR. The chain crosses the membrane as a helical span at residues 13–33; it reads FAVKLATAIVLALFVGFHFQL. The Cytoplasmic segment spans residues 34 to 37; sequence ETPR. A helical transmembrane segment spans residues 38-58; that stretch reads WAVLTAAIVAAGPAFAAGGEP. Topologically, residues 59–68 are periplasmic; it reads YSGAIRYRGF. Residues 69-89 traverse the membrane as a helical segment; sequence LRIIGTFIGCIAGLVIIIAMI. Over 90–92 the chain is Cytoplasmic; it reads RAP. A helical membrane pass occupies residues 93–113; sequence LLMILVCCIWAGFCTWISSLV. Residues 114-120 are Periplasmic-facing; that stretch reads RIENSYA. The helical transmembrane segment at 121–141 threads the bilayer; the sequence is WGLAGYTALIIVITIQPEPLL. Over 142-151 the chain is Cytoplasmic; the sequence is TPQFAVERCS. The chain crosses the membrane as a helical span at residues 152–172; it reads EIVIGIVCAIMADLLFSPRSI. At 173–369 the chain is on the periplasmic side; it reads KQEVDRELES…RTTLSCILGT (197 aa). The helical transmembrane segment at 370–390 threads the bilayer; the sequence is LFWLWTGWTSGSGAMVMIAVV. Residues 391-406 lie on the Cytoplasmic side of the membrane; it reads TSLAMRLPNPRMVAID. A helical membrane pass occupies residues 407 to 427; sequence FIYGTLAALPLGLLYFLVIIP. Topologically, residues 428 to 430 are periplasmic; it reads NTQ. Residues 431–451 form a helical membrane-spanning segment; it reads QSMLLLCISLAVLGFFLGIEV. Residues 452–458 lie on the Cytoplasmic side of the membrane; the sequence is QKRRLGS. A helical membrane pass occupies residues 459–479; the sequence is MGALASTINIIVLDNPMTFHF. The Periplasmic portion of the chain corresponds to 480-481; the sequence is SQ. A helical transmembrane segment spans residues 482–502; the sequence is FLDSALGQIVGCVLAFTVILL. Residues 503–655 are Cytoplasmic-facing; sequence VRDKSRDRTG…HKYQHALTDS (153 aa).

This sequence belongs to the aromatic acid exporter ArAE (TC 2.A.85) family.

Its subcellular location is the cell inner membrane. Functionally, forms an efflux pump with AaeA. Could function as a metabolic relief valve, allowing to eliminate certain compounds when they accumulate to high levels in the cell. This is p-hydroxybenzoic acid efflux pump subunit AaeB from Escherichia coli O157:H7.